Reading from the N-terminus, the 451-residue chain is Chromosomal replication initiator protein DnaA (451 aa).

Residues 1–94 (MKPDLSSLWQ…KPEPKPAQPS (94 aa)) form a domain I, interacts with DnaA modulators region. The interval 87 to 106 (EPKPAQPSALPTHHNKEENK) is disordered. Residues 95–113 (ALPTHHNKEENKPQTVIRS) are domain II. Positions 114–331 (YLNPKHVFEN…GALNRVSANA (218 aa)) are domain III, AAA+ region. Residues Gly-159, Gly-161, Lys-162, and Thr-163 each coordinate ATP. The interval 332 to 451 (EFMGAAITID…WSNLIRTLSV (120 aa)) is domain IV, binds dsDNA.

This sequence belongs to the DnaA family. Oligomerizes as a right-handed, spiral filament on DNA at oriC.

Its subcellular location is the cytoplasm. Functionally, plays an essential role in the initiation and regulation of chromosomal replication. ATP-DnaA binds to the origin of replication (oriC) to initiate formation of the DNA replication initiation complex once per cell cycle. Binds the DnaA box (a 9 base pair repeat at the origin) and separates the double-stranded (ds)DNA. Forms a right-handed helical filament on oriC DNA; dsDNA binds to the exterior of the filament while single-stranded (ss)DNA is stabiized in the filament's interior. The ATP-DnaA-oriC complex binds and stabilizes one strand of the AT-rich DNA unwinding element (DUE), permitting loading of DNA polymerase. After initiation quickly degrades to an ADP-DnaA complex that is not apt for DNA replication. Binds acidic phospholipids. This is Chromosomal replication initiator protein DnaA from Pasteurella multocida (strain Pm70).